We begin with the raw amino-acid sequence, 277 residues long: Phosphatidylglycerol--prolipoprotein diacylglyceryl transferase (277 aa).

4 consecutive transmembrane segments (helical) span residues I22–V42, L59–Y79, G107–Y127, and M133–I153. R154 lines the a 1,2-diacyl-sn-glycero-3-phospho-(1'-sn-glycerol) pocket. Transmembrane regions (helical) follow at residues P186–Y206, G216–L236, and M251–G271.

It belongs to the Lgt family.

Its subcellular location is the cell inner membrane. The catalysed reaction is L-cysteinyl-[prolipoprotein] + a 1,2-diacyl-sn-glycero-3-phospho-(1'-sn-glycerol) = an S-1,2-diacyl-sn-glyceryl-L-cysteinyl-[prolipoprotein] + sn-glycerol 1-phosphate + H(+). It participates in protein modification; lipoprotein biosynthesis (diacylglyceryl transfer). In terms of biological role, catalyzes the transfer of the diacylglyceryl group from phosphatidylglycerol to the sulfhydryl group of the N-terminal cysteine of a prolipoprotein, the first step in the formation of mature lipoproteins. The polypeptide is Phosphatidylglycerol--prolipoprotein diacylglyceryl transferase (Bacteroides fragilis (strain ATCC 25285 / DSM 2151 / CCUG 4856 / JCM 11019 / LMG 10263 / NCTC 9343 / Onslow / VPI 2553 / EN-2)).